A 130-amino-acid polypeptide reads, in one-letter code: Small ribosomal subunit protein uS9 (130 aa).

The tract at residues 109 to 130 (RVKERKKYGQKGARAKFQFSKR) is disordered.

It belongs to the universal ribosomal protein uS9 family.

The protein is Small ribosomal subunit protein uS9 of Desulfotalea psychrophila (strain LSv54 / DSM 12343).